Reading from the N-terminus, the 248-residue chain is Pulmonary surfactant-associated protein A (248 aa).

The first 17 residues, 1-17 (MWLRCLALALTLLMVSG), serve as a signal peptide directing secretion. A glycan (N-linked (GlcNAc...) asparagine) is linked at Asn-20. Residues 28-100 (GNPGIPGTPG…PGERGPPGLP (73 aa)) enclose the Collagen-like domain. The tract at residues 29–103 (NPGIPGTPGS…RGPPGLPASL (75 aa)) is disordered. A 4-hydroxyproline mark is found at Pro-30, Pro-33, Pro-36, Pro-42, Pro-54, Pro-57, Pro-63, Pro-67, and Pro-70. Over residues 42-51 (PGRDGRDGVK) the composition is skewed to basic and acidic residues. A compositionally biased stretch (pro residues) spans 54–65 (PGPPGPLGPPGG). A compositionally biased stretch (basic and acidic residues) spans 84-93 (ERGEKGEPGE). One can recognise a C-type lectin domain in the interval 132–248 (LVVGRKVFSS…LQYRLAICEF (117 aa)). 2 cysteine pairs are disulfide-bonded: Cys-155–Cys-246 and Cys-224–Cys-238. Asn-207 carries an N-linked (GlcNAc...) asparagine glycan. Residues Glu-215, Arg-217, and Asn-234 each contribute to the Ca(2+) site.

It belongs to the SFTPA family. As to quaternary structure, oligomeric complex of 6 set of homotrimers.

It is found in the secreted. The protein localises to the extracellular space. Its subcellular location is the extracellular matrix. It localises to the surface film. Functionally, in presence of calcium ions, it binds to surfactant phospholipids and contributes to lower the surface tension at the air-liquid interface in the alveoli of the mammalian lung and is essential for normal respiration. Enhances the expression of MYO18A/SP-R210 on alveolar macrophages. This chain is Pulmonary surfactant-associated protein A (SFTPA1), found in Canis lupus familiaris (Dog).